We begin with the raw amino-acid sequence, 399 residues long: Tyrosine--tRNA ligase (399 aa).

Positions 42–51 (PTAPDLHLGH) match the 'HIGH' region motif. Residues 226–230 (KMSKS) carry the 'KMSKS' region motif. Position 229 (Lys229) interacts with ATP. The region spanning 336 to 396 (MPIAAVLNKA…GRKAFARITL (61 aa)) is the S4 RNA-binding domain.

This sequence belongs to the class-I aminoacyl-tRNA synthetase family. TyrS type 2 subfamily. In terms of assembly, homodimer.

It is found in the cytoplasm. The enzyme catalyses tRNA(Tyr) + L-tyrosine + ATP = L-tyrosyl-tRNA(Tyr) + AMP + diphosphate + H(+). Its function is as follows. Catalyzes the attachment of tyrosine to tRNA(Tyr) in a two-step reaction: tyrosine is first activated by ATP to form Tyr-AMP and then transferred to the acceptor end of tRNA(Tyr). This is Tyrosine--tRNA ligase from Pseudomonas fluorescens (strain ATCC BAA-477 / NRRL B-23932 / Pf-5).